An 865-amino-acid chain; its full sequence is General transcription factor 3C polypeptide 5 (865 aa).

5 disordered regions span residues 1–21 (MNDE…NNNS), 111–163 (RPNK…NEKF), 191–215 (NNNT…TVPI), 391–522 (QDNH…NKEG), and 669–865 (DNKM…EESE). 5 stretches are compositionally biased toward low complexity: residues 7–21 (KNNS…NNNS), 115–126 (QQTQTQTQTQTQ), 140–158 (QSPK…QQPQ), 199–210 (DNVNDSSSSSSS), and 401–411 (SKNNNNNNNNK). 2 stretches are compositionally biased toward basic and acidic residues: residues 412-439 (DSIK…KQEE) and 448-489 (NNEK…KGDD). 2 stretches are compositionally biased toward low complexity: residues 508–521 (EGNN…NNKE) and 677–696 (RSNT…PKST). 3 stretches are compositionally biased toward basic and acidic residues: residues 697-713 (QPKE…EPRP), 757-766 (QNKEIDESLK), and 773-786 (MEKD…KNEE). Acidic residues-rich tracts occupy residues 800-820 (DYDD…DFDG) and 839-865 (EDSE…EESE).

This sequence belongs to the TFIIIC subunit 5 family. In terms of assembly, part of the TFIIIC complex.

The protein localises to the nucleus. Involved in RNA polymerase III-mediated transcription. Integral, tightly associated component of the DNA-binding TFIIIC2 subcomplex that directly binds tRNA and virus-associated RNA promoters. This is General transcription factor 3C polypeptide 5 (gtf3c5) from Dictyostelium discoideum (Social amoeba).